A 228-amino-acid polypeptide reads, in one-letter code: Probable endo-1,4-beta-xylanase A (228 aa).

The signal sequence occupies residues 1–18 (MVSFSYLLLACSAIGALA). An N-linked (GlcNAc...) asparagine glycan is attached at N29. One can recognise a GH11 domain in the interval 40-228 (AGTPSSTGWN…SSGSASITVY (189 aa)). E124 acts as the Nucleophile in catalysis. E215 (proton donor) is an active-site residue.

The protein belongs to the glycosyl hydrolase 11 (cellulase G) family.

The protein resides in the secreted. The catalysed reaction is Endohydrolysis of (1-&gt;4)-beta-D-xylosidic linkages in xylans.. Its pathway is glycan degradation; xylan degradation. Functionally, endo-1,4-beta-xylanase involved in the hydrolysis of xylan, a major structural heterogeneous polysaccharide found in plant biomass representing the second most abundant polysaccharide in the biosphere, after cellulose. In Aspergillus fumigatus (strain CBS 144.89 / FGSC A1163 / CEA10) (Neosartorya fumigata), this protein is Probable endo-1,4-beta-xylanase A (xlnA).